A 358-amino-acid chain; its full sequence is Putative KilA-N domain-containing protein 313L (358 aa).

In terms of domain architecture, KilA-N spans N15–F124. Positions V126–R245 form a coiled coil.

The protein belongs to the IIV-6 006L/238R/313L/468L family.

The polypeptide is Putative KilA-N domain-containing protein 313L (Acheta domesticus (House cricket)).